Reading from the N-terminus, the 861-residue chain is Major vault protein (861 aa).

The residue at position 2 (Ala2) is an N-acetylalanine. MVP repeat units follow at residues 2 to 56, 57 to 111, 112 to 164, 165 to 217, 218 to 272, 273 to 323, 324 to 379, 380 to 457, and 458 to 520; these read ATEE…VPPR, HYCI…DITP, LQVV…EIIQ, ATVI…DLVD, AVIL…GVVP, ITTL…IQDV, YVLS…ERQA, IPLD…KTRV, and VSYR…LLGP. A Phosphoserine modification is found at Ser421. Lys444 participates in a covalent cross-link: Glycyl lysine isopeptide (Lys-Gly) (interchain with G-Cter in SUMO2). Residue Lys704 forms a Glycyl lysine isopeptide (Lys-Gly) (interchain with G-Cter in SUMO2) linkage.

As to quaternary structure, the vault ribonucleoprotein particle is a huge (400 A x 670 A) cage structure of 12.9 MDa. It consists of a dimer of half-vaults, with each half-vault comprising 39 identical major vault protein (MVP) chains, PARP4 and one or more vault RNAs (vRNAs). Interacts with PTEN and activated MAPK1. The phosphorylated protein interacts with the SH2 domains of PTPN11 and SRC. Interacts with APEX1. May interact with ZNF540. Interacts with TEP1. Phosphorylated on Tyr residues after EGF stimulation. In terms of processing, dephosphorylated by PTPN11.

Its subcellular location is the cytoplasm. The protein resides in the nucleus. In terms of biological role, required for normal vault structure. Vaults are multi-subunit structures that may act as scaffolds for proteins involved in signal transduction. Vaults may also play a role in nucleo-cytoplasmic transport. Down-regulates IFNG-mediated STAT1 signaling and subsequent activation of JAK. Down-regulates SRC activity and signaling through MAP kinases. This Mus musculus (Mouse) protein is Major vault protein (Mvp).